The sequence spans 319 residues: Putative binding protein BAB2_1146 (319 aa).

The signal sequence occupies residues 1–22 (MKRRTFLAMSLALTFLPSVALA).

The protein belongs to the bacterial solute-binding protein SsuA/TauA family. In terms of assembly, the complex is composed of two ATP-binding proteins (BAB2_1147), two transmembrane proteins (BAB2_1148) and a solute-binding protein (BAB2_1146).

Its subcellular location is the periplasm. Functionally, probably part of an ABC transporter complex. In Brucella abortus (strain 2308), this protein is Putative binding protein BAB2_1146.